Consider the following 316-residue polypeptide: Methionyl-tRNA formyltransferase (316 aa).

111–114 (SLLP) lines the (6S)-5,6,7,8-tetrahydrofolate pocket.

Belongs to the Fmt family.

It carries out the reaction L-methionyl-tRNA(fMet) + (6R)-10-formyltetrahydrofolate = N-formyl-L-methionyl-tRNA(fMet) + (6S)-5,6,7,8-tetrahydrofolate + H(+). Its function is as follows. Attaches a formyl group to the free amino group of methionyl-tRNA(fMet). The formyl group appears to play a dual role in the initiator identity of N-formylmethionyl-tRNA by promoting its recognition by IF2 and preventing the misappropriation of this tRNA by the elongation apparatus. The protein is Methionyl-tRNA formyltransferase of Limosilactobacillus fermentum (strain NBRC 3956 / LMG 18251) (Lactobacillus fermentum).